Consider the following 444-residue polypeptide: Biotin carboxylase 2 (444 aa).

A Biotin carboxylation domain is found at 1–444 (MFTKVLIANR…VTTDFLKQHL (444 aa)). ATP-binding positions include K116, K158, 164-165 (GG), 200-203 (EKVI), H208, and H235. One can recognise an ATP-grasp domain in the interval 120–317 (RKAMEAAGVP…LVEQQLRIAA (198 aa)). K237 contributes to the hydrogencarbonate binding site. ATP contacts are provided by E275 and E288. The Mg(2+) site is built by E275, E288, and N290. Mn(2+)-binding residues include E275, E288, and N290. Residues R292, V295, and R338 each contribute to the hydrogencarbonate site. R292 is an active-site residue. A biotin-binding site is contributed by R338.

Acetyl-CoA carboxylase is a heterohexamer of biotin carboxyl carrier protein, biotin carboxylase and the two subunits of carboxyl transferase in a 2:2 complex. It depends on Mg(2+) as a cofactor. Mn(2+) is required as a cofactor.

It catalyses the reaction N(6)-biotinyl-L-lysyl-[protein] + hydrogencarbonate + ATP = N(6)-carboxybiotinyl-L-lysyl-[protein] + ADP + phosphate + H(+). Its pathway is lipid metabolism; malonyl-CoA biosynthesis; malonyl-CoA from acetyl-CoA: step 1/1. Functionally, this protein is a component of the acetyl coenzyme A carboxylase complex; first, biotin carboxylase catalyzes the carboxylation of the carrier protein and then the transcarboxylase transfers the carboxyl group to form malonyl-CoA. The protein is Biotin carboxylase 2 (accC2) of Bacillus subtilis (strain 168).